The primary structure comprises 443 residues: UPF0597 protein DVU_0440 (443 aa).

It belongs to the UPF0597 family.

The polypeptide is UPF0597 protein DVU_0440 (Nitratidesulfovibrio vulgaris (strain ATCC 29579 / DSM 644 / CCUG 34227 / NCIMB 8303 / VKM B-1760 / Hildenborough) (Desulfovibrio vulgaris)).